Consider the following 113-residue polypeptide: uncharacterized protein (113 aa).

Residues 7-29 (FFILIVLLFTVFSLKEFIPNTFC) form a helical membrane-spanning segment.

The protein resides in the membrane. This is an uncharacterized protein from Aquifex aeolicus (strain VF5).